A 276-amino-acid chain; its full sequence is Large ribosomal subunit protein uL2 (276 aa).

The interval 211–276 (RNRHRGIRPQ…KLIISRRKGK (66 aa)) is disordered. A compositionally biased stretch (basic and acidic residues) spans 230-240 (DHPHGGGEGKK).

The protein belongs to the universal ribosomal protein uL2 family. As to quaternary structure, part of the 50S ribosomal subunit. Forms a bridge to the 30S subunit in the 70S ribosome.

One of the primary rRNA binding proteins. Required for association of the 30S and 50S subunits to form the 70S ribosome, for tRNA binding and peptide bond formation. It has been suggested to have peptidyltransferase activity; this is somewhat controversial. Makes several contacts with the 16S rRNA in the 70S ribosome. This Campylobacter jejuni subsp. doylei (strain ATCC BAA-1458 / RM4099 / 269.97) protein is Large ribosomal subunit protein uL2.